A 570-amino-acid chain; its full sequence is Periplasmic trehalase (570 aa).

Residues 1–34 form the signal peptide; the sequence is MITPALRHSGTLSFAIKLTVASTLLTFASLSAHA. Residues R157, 164-165, N201, 210-212, 282-284, and G315 each bind substrate; these read WD, RSQ, and RPE. Residues D317 and E501 each act as proton donor/acceptor in the active site. A substrate-binding site is contributed by E516. Positions 542–570 are disordered; that stretch reads KPCDSVPATRPAAPGASQPAPQKQVETTP. Low complexity predominate over residues 552–570; it reads PAAPGASQPAPQKQVETTP.

The protein belongs to the glycosyl hydrolase 37 family. As to quaternary structure, monomer.

The protein resides in the periplasm. It catalyses the reaction alpha,alpha-trehalose + H2O = alpha-D-glucose + beta-D-glucose. In terms of biological role, provides the cells with the ability to utilize trehalose at high osmolarity by splitting it into glucose molecules that can subsequently be taken up by the phosphotransferase-mediated uptake system. The protein is Periplasmic trehalase of Citrobacter koseri (strain ATCC BAA-895 / CDC 4225-83 / SGSC4696).